Here is a 274-residue protein sequence, read N- to C-terminus: MRFIVTGNKRAADWGAVYIVKKIKEFNPSPEKKFVLGLPTGSTPLQMYKRLIQFNKEGIISFKNVITFNMDEYVGLPKTHPQSYHYYMYNNFFNHIDIDKENVNILNGMAKNYKEECRKYEEKILEVGGIDLFLGGVGVDGHIAFNEPGSSFKSRTREKQLTEDTIIVNSRFFNNDITKVPQSALTVGVSTIMDAKEVLIMVEGNNKARALHMGIEEGINHMWTISALQLHEKAIIVADEDACAELKVATYKYYKDIEKKNYNIDKLIENLYKK.

Asp71 serves as the catalytic Proton acceptor; for enolization step. The For ring-opening step role is filled by Asp140. Catalysis depends on His142, which acts as the Proton acceptor; for ring-opening step. The active-site For ring-opening step is Glu147.

It belongs to the glucosamine/galactosamine-6-phosphate isomerase family. NagB subfamily.

The catalysed reaction is alpha-D-glucosamine 6-phosphate + H2O = beta-D-fructose 6-phosphate + NH4(+). It participates in amino-sugar metabolism; N-acetylneuraminate degradation; D-fructose 6-phosphate from N-acetylneuraminate: step 5/5. In terms of biological role, catalyzes the reversible isomerization-deamination of glucosamine 6-phosphate (GlcN6P) to form fructose 6-phosphate (Fru6P) and ammonium ion. This Fusobacterium nucleatum subsp. nucleatum (strain ATCC 25586 / DSM 15643 / BCRC 10681 / CIP 101130 / JCM 8532 / KCTC 2640 / LMG 13131 / VPI 4355) protein is Glucosamine-6-phosphate deaminase.